The following is a 707-amino-acid chain: Polyribonucleotide nucleotidyltransferase (707 aa).

Positions 488 and 494 each coordinate Mg(2+). The KH domain maps to P555 to I614. The 69-residue stretch at G624 to K692 folds into the S1 motif domain.

It belongs to the polyribonucleotide nucleotidyltransferase family. It depends on Mg(2+) as a cofactor.

It is found in the cytoplasm. The enzyme catalyses RNA(n+1) + phosphate = RNA(n) + a ribonucleoside 5'-diphosphate. In terms of biological role, involved in mRNA degradation. Catalyzes the phosphorolysis of single-stranded polyribonucleotides processively in the 3'- to 5'-direction. The polypeptide is Polyribonucleotide nucleotidyltransferase (Polaromonas sp. (strain JS666 / ATCC BAA-500)).